A 658-amino-acid polypeptide reads, in one-letter code: Exoribonuclease 2 (658 aa).

Residues 189-531 enclose the RNB domain; it reads REDLTALHFI…NHRLIKAVLT (343 aa). One can recognise an S1 motif domain in the interval 576–658; it reads KPTFQAEIQD…ETRSIVGTLC (83 aa).

Belongs to the RNR ribonuclease family. RNase II subfamily.

Its subcellular location is the cytoplasm. It catalyses the reaction Exonucleolytic cleavage in the 3'- to 5'-direction to yield nucleoside 5'-phosphates.. Functionally, involved in mRNA degradation. Hydrolyzes single-stranded polyribonucleotides processively in the 3' to 5' direction. The polypeptide is Exoribonuclease 2 (Pasteurella multocida (strain Pm70)).